We begin with the raw amino-acid sequence, 321 residues long: Probable arabinan endo-1,5-alpha-L-arabinosidase C (321 aa).

The first 20 residues, 1 to 20, serve as a signal peptide directing secretion; it reads MYLYTLILLFLASVNVNAYA. D33 (proton acceptor) is an active-site residue. 2 N-linked (GlcNAc...) asparagine glycosylation sites follow: N75 and N192. Residue E200 is the Proton donor of the active site. N224 carries an N-linked (GlcNAc...) asparagine glycan.

This sequence belongs to the glycosyl hydrolase 43 family.

Its subcellular location is the secreted. It catalyses the reaction Endohydrolysis of (1-&gt;5)-alpha-arabinofuranosidic linkages in (1-&gt;5)-arabinans.. The protein operates within glycan metabolism; L-arabinan degradation. In terms of biological role, endo-1,5-alpha-L-arabinanase involved in degradation of pectin. Its preferred substrate is linear 1,5-alpha-L-arabinan. This chain is Probable arabinan endo-1,5-alpha-L-arabinosidase C (abnC), found in Neosartorya fischeri (strain ATCC 1020 / DSM 3700 / CBS 544.65 / FGSC A1164 / JCM 1740 / NRRL 181 / WB 181) (Aspergillus fischerianus).